The chain runs to 212 residues: ATP-dependent dethiobiotin synthetase BioD (212 aa).

Position 12–17 (12–17 (DCGKTF)) interacts with ATP. Mg(2+) is bound at residue T16. Residue K33 is part of the active site. S37 lines the substrate pocket. ATP is bound by residues D50, 110–113 (EGAG), and 170–171 (NC). Mg(2+) is bound by residues D50 and E110.

The protein belongs to the dethiobiotin synthetase family. In terms of assembly, homodimer. It depends on Mg(2+) as a cofactor.

It is found in the cytoplasm. It carries out the reaction (7R,8S)-7,8-diammoniononanoate + CO2 + ATP = (4R,5S)-dethiobiotin + ADP + phosphate + 3 H(+). The protein operates within cofactor biosynthesis; biotin biosynthesis; biotin from 7,8-diaminononanoate: step 1/2. In terms of biological role, catalyzes a mechanistically unusual reaction, the ATP-dependent insertion of CO2 between the N7 and N8 nitrogen atoms of 7,8-diaminopelargonic acid (DAPA, also called 7,8-diammoniononanoate) to form a ureido ring. This Legionella pneumophila subsp. pneumophila (strain Philadelphia 1 / ATCC 33152 / DSM 7513) protein is ATP-dependent dethiobiotin synthetase BioD.